A 208-amino-acid polypeptide reads, in one-letter code: Outer-membrane lipoprotein carrier protein (208 aa).

Positions 1 to 21 (MRLIRTLFVAALAMGASLAHA) are cleaved as a signal peptide.

Belongs to the LolA family. In terms of assembly, monomer.

It localises to the periplasm. Participates in the translocation of lipoproteins from the inner membrane to the outer membrane. Only forms a complex with a lipoprotein if the residue after the N-terminal Cys is not an aspartate (The Asp acts as a targeting signal to indicate that the lipoprotein should stay in the inner membrane). The protein is Outer-membrane lipoprotein carrier protein of Pseudomonas aeruginosa (strain UCBPP-PA14).